Here is a 327-residue protein sequence, read N- to C-terminus: Annexin A8-like protein 1 (327 aa).

Annexin repeat units lie at residues 21-92, 93-164, 177-249, and 253-324; these read FNPD…ALMY, PPYR…CLLQ, ALAL…TVVK, and NLHS…SLVG. 4 residues coordinate Ca(2+): methionine 266, glycine 268, glycine 270, and aspartate 310.

This sequence belongs to the annexin family.

The sequence is that of Annexin A8-like protein 1 from Homo sapiens (Human).